We begin with the raw amino-acid sequence, 317 residues long: NF-kappa-B inhibitor alpha (317 aa).

Residues Met-1 to Asp-39 are disordered. Residues Gly-15–Asp-39 are compositionally biased toward basic and acidic residues. Lys-21 participates in a covalent cross-link: Glycyl lysine isopeptide (Lys-Gly) (interchain with G-Cter in SUMO); alternate. Lys-21 is covalently cross-linked (Glycyl lysine isopeptide (Lys-Gly) (interchain with G-Cter in ubiquitin); alternate). Lys-22 participates in a covalent cross-link: Glycyl lysine isopeptide (Lys-Gly) (interchain with G-Cter in ubiquitin). A Destruction motif motif is present at residues His-30–Ser-36. Ser-32 bears the Phosphoserine; by IKKA and IKKE mark. Ser-36 is subject to Phosphoserine; by IKKA, IKKB, IKKE and TBK1. Tyr-42 carries the post-translational modification Phosphotyrosine; by Tyr-kinases. The Nuclear export signal signature appears at Met-45–Leu-54. ANK repeat units lie at residues Asp-73 to Phe-103, Leu-110 to Leu-139, Arg-143 to Leu-172, Asn-182 to Ala-211, and Asn-216 to Arg-245. The short motif at Leu-110–Ile-120 is the Nuclear import signal element. Asn-210 and Asn-244 each carry (3S)-3-hydroxyasparagine; by HIF1AN; partial. 2 positions are modified to phosphoserine; by CK2: Ser-283 and Ser-288. Thr-291 bears the Phosphothreonine; by CK2 mark. Ser-293 is subject to Phosphoserine; by CK2. Residue Thr-299 is modified to Phosphothreonine; by CK2.

The protein belongs to the NF-kappa-B inhibitor family. As to quaternary structure, interacts with RELA; the interaction requires the nuclear import signal. Part of a 70-90 kDa complex at least consisting of CHUK, IKBKB, NFKBIA, RELA, ELP1 and MAP3K14. Interacts with NKIRAS1 and NKIRAS2. Interacts with isoform 1 and isoform 2 of RWDD3; the interaction enhances sumoylation. Interacts with PRMT2. Interacts with PRKACA in platelets; this interaction is disrupted by thrombin and collagen. Interacts with MEFV. Interacts with DDRGK1; positively regulates NFKBIA phosphorylation and degradation. Interacts with HNRNPA2B1; the interaction may be mediated by the RRM2 domain of HNRNPA2B1, and HNRNPA2B1 may interact simultaneously with FAM76B and either NFKBIA or NFKBIE to form a complex. In terms of assembly, (Microbial infection) Interacts with HBV protein X. Phosphorylated at Ser-32 and Ser-36 by IKKA/CHUK and IKKB/IKBKB; disables inhibition of NF-kappa-B DNA-binding activity. Phosphorylation at positions 32 and 36 is prerequisite to recognition by the SCF(FBXW11) and SCF(BTRC) complexes, leading to polyubiquitination and subsequent degradation. Phosphorylated at Ser-32 in response to FK506 treatment: phosphorylation is independent of IKKA/CHUK and IKKB/IKBKB and promotes NFKBIA degradation, followed by NF-kappa-B activation. Phosphorylated at Tyr-42: its effect is however unclear. According to a report, phosphorylation at Tyr-42 activates NF-kappa-B without triggering proteolytic degradation of NFKBIA. According to another publication, phosphorylation at Tyr-42 inhibits NF-kappa-B activity by preventing phosphorylation at Ser-32 and Ser-36 and subsequent ubiquitination and degradation. Post-translationally, polyubiquitinated at Lys-21 and/or Lys-22 following phosphorylation at Ser-32 and Ser-36. Monoubiquitinated at Lys-21 and/or Lys-22 by UBE2D3. Ubiquitin chain elongation is then performed by CDC34 in cooperation with the SCF(FBXW11) E3 ligase complex, building ubiquitin chains from the UBE2D3-primed NFKBIA-linked ubiquitin. The resulting polyubiquitination leads to protein degradation. Also ubiquitinated by the SCF(BTRC) complex following stimulus-dependent phosphorylation at Ser-32 and Ser-36. Deubiquitinated by USP38, leading to NF-kappa-B inhibition. In terms of processing, sumoylated; sumoylation requires the presence of the nuclear import signal. Sumoylation blocks ubiquitination and proteasome-mediated degradation of the protein thereby increasing the protein stability. Hydroxylated by HIF1AN. Post-translationally, (Microbial infection) Deubiquitinated by porcine reproductive and respiratory syndrome virus Nsp2 protein, which thereby interferes with NFKBIA degradation and impairs subsequent NF-kappa-B activation.

The protein localises to the cytoplasm. The protein resides in the nucleus. Inhibits the activity of dimeric NF-kappa-B/REL complexes by trapping REL (RELA/p65 and NFKB1/p50) dimers in the cytoplasm by masking their nuclear localization signals. On cellular stimulation by immune and pro-inflammatory responses, becomes phosphorylated promoting ubiquitination and degradation, enabling the dimeric RELA to translocate to the nucleus and activate transcription. This is NF-kappa-B inhibitor alpha (NFKBIA) from Homo sapiens (Human).